The sequence spans 306 residues: Aspartate carbamoyltransferase catalytic subunit (306 aa).

Arg-56 and Thr-57 together coordinate carbamoyl phosphate. An L-aspartate-binding site is contributed by Lys-84. Carbamoyl phosphate-binding residues include Arg-106, His-136, and Gln-139. L-aspartate contacts are provided by Arg-169 and Arg-221. Residues Ala-262 and Pro-263 each coordinate carbamoyl phosphate.

This sequence belongs to the aspartate/ornithine carbamoyltransferase superfamily. ATCase family. In terms of assembly, heterododecamer (2C3:3R2) of six catalytic PyrB chains organized as two trimers (C3), and six regulatory PyrI chains organized as three dimers (R2).

It carries out the reaction carbamoyl phosphate + L-aspartate = N-carbamoyl-L-aspartate + phosphate + H(+). It functions in the pathway pyrimidine metabolism; UMP biosynthesis via de novo pathway; (S)-dihydroorotate from bicarbonate: step 2/3. In terms of biological role, catalyzes the condensation of carbamoyl phosphate and aspartate to form carbamoyl aspartate and inorganic phosphate, the committed step in the de novo pyrimidine nucleotide biosynthesis pathway. The chain is Aspartate carbamoyltransferase catalytic subunit from Streptococcus gordonii (strain Challis / ATCC 35105 / BCRC 15272 / CH1 / DL1 / V288).